A 154-amino-acid chain; its full sequence is Protein X (154 aa).

The segment at 68 to 117 (PCALRFTSARRMETTVNAHRNLPKVLHKRTLGLSVMSTTDLEAYFKDCVF) is mitochondrial targeting sequence.

This sequence belongs to the orthohepadnavirus protein X family. May form homodimer. May interact with host CEBPA, CFLAR, CREB1, DDB1, E4F1, HBXIP, HSPD1/HSP60, NFKBIA, POLR2E and SMAD4. Interacts with host SMC5-SMC6 complex and induces its degradation. Interacts with host TRPC4AP; leading to prevent ubiquitination of TRPC4AP. Interacts with host PLSCR1; this interaction promotes ubiquitination and degradation of HBx and impairs HBx-mediated cell proliferation. Post-translationally, a fraction may be phosphorylated in insect cells and HepG2 cells, a human hepatoblastoma cell line. Phosphorylated in vitro by host protein kinase C or mitogen-activated protein kinase. N-acetylated in insect cells.

It is found in the host cytoplasm. The protein localises to the host nucleus. It localises to the host mitochondrion. Functionally, multifunctional protein that plays a role in silencing host antiviral defenses and promoting viral transcription. Does not seem to be essential for HBV infection. May be directly involved in development of cirrhosis and liver cancer (hepatocellular carcinoma). Most of cytosolic activities involve modulation of cytosolic calcium. The effect on apoptosis is controversial depending on the cell types in which the studies have been conducted. May induce apoptosis by localizing in mitochondria and causing loss of mitochondrial membrane potential. May also modulate apoptosis by binding host CFLAR, a key regulator of the death-inducing signaling complex (DISC). Promotes viral transcription by using the host E3 ubiquitin ligase DDB1 to target the SMC5-SMC6 complex to proteasomal degradation. This host complex would otherwise bind to viral episomal DNA, and prevents its transcription. Moderately stimulates transcription of many different viral and cellular transcription elements. Promoters and enhancers stimulated by HBx contain DNA binding sites for NF-kappa-B, AP-1, AP-2, c-EBP, ATF/CREB, or the calcium-activated factor NF-AT. This is Protein X from Hepatitis B virus genotype B1 (isolate Japan/Yamagata-2/1998) (HBV-B).